A 109-amino-acid polypeptide reads, in one-letter code: Spermidine export protein MdtI (109 aa).

4 helical membrane-spanning segments follow: residues Trp-6–Leu-26, Cys-36–Val-56, Ala-64–Phe-84, and Leu-88–Phe-108.

It belongs to the drug/metabolite transporter (DMT) superfamily. Small multidrug resistance (SMR) (TC 2.A.7.1) family. MdtI subfamily. In terms of assembly, forms a complex with MdtJ.

The protein localises to the cell inner membrane. Its function is as follows. Catalyzes the excretion of spermidine. The sequence is that of Spermidine export protein MdtI from Salmonella choleraesuis (strain SC-B67).